The chain runs to 332 residues: Tyrosine--tRNA ligase (332 aa).

Residues tyrosine 32, tyrosine 156, glutamine 160, aspartate 163, and glutamine 178 each coordinate L-tyrosine. The 'KMSKS' region signature appears at lysine 219–serine 223. Lysine 222 contacts ATP.

Belongs to the class-I aminoacyl-tRNA synthetase family. TyrS type 4 subfamily. In terms of assembly, homodimer.

Its subcellular location is the cytoplasm. It carries out the reaction tRNA(Tyr) + L-tyrosine + ATP = L-tyrosyl-tRNA(Tyr) + AMP + diphosphate + H(+). In terms of biological role, catalyzes the attachment of tyrosine to tRNA(Tyr) in a two-step reaction: tyrosine is first activated by ATP to form Tyr-AMP and then transferred to the acceptor end of tRNA(Tyr). In Thermoplasma acidophilum (strain ATCC 25905 / DSM 1728 / JCM 9062 / NBRC 15155 / AMRC-C165), this protein is Tyrosine--tRNA ligase.